The following is a 141-amino-acid chain: Putative inactive deoxyuridine 5'-triphosphate nucleotidohydrolase-like protein FLJ16323 (141 aa).

It belongs to the dUTPase family.

The polypeptide is Putative inactive deoxyuridine 5'-triphosphate nucleotidohydrolase-like protein FLJ16323 (Homo sapiens (Human)).